The primary structure comprises 312 residues: Malate dehydrogenase 1 (312 aa).

Residues 11–16 and D35 contribute to the NAD(+) site; that span reads GAGQIG. Substrate-binding residues include R86 and R92. Residues N99 and 122–124 contribute to the NAD(+) site; that span reads ITN. Substrate-binding residues include N124 and R155. The active-site Proton acceptor is the H179.

It belongs to the LDH/MDH superfamily. MDH type 3 family.

It catalyses the reaction (S)-malate + NAD(+) = oxaloacetate + NADH + H(+). Catalyzes the reversible oxidation of malate to oxaloacetate. This is Malate dehydrogenase 1 from Anaeromyxobacter dehalogenans (strain 2CP-C).